The chain runs to 426 residues: Glutamate-1-semialdehyde 2,1-aminomutase (426 aa).

Residue lysine 263 is modified to N6-(pyridoxal phosphate)lysine.

Belongs to the class-III pyridoxal-phosphate-dependent aminotransferase family. HemL subfamily. In terms of assembly, homodimer. Pyridoxal 5'-phosphate is required as a cofactor.

The protein resides in the cytoplasm. The enzyme catalyses (S)-4-amino-5-oxopentanoate = 5-aminolevulinate. It participates in porphyrin-containing compound metabolism; protoporphyrin-IX biosynthesis; 5-aminolevulinate from L-glutamyl-tRNA(Glu): step 2/2. This Dichelobacter nodosus (strain VCS1703A) protein is Glutamate-1-semialdehyde 2,1-aminomutase.